Reading from the N-terminus, the 451-residue chain is Trigger factor (451 aa).

One can recognise a PPIase FKBP-type domain in the interval 165–250 (DDKLTIDFEG…LHQIQAREAL (86 aa)).

It belongs to the FKBP-type PPIase family. Tig subfamily.

The protein resides in the cytoplasm. It catalyses the reaction [protein]-peptidylproline (omega=180) = [protein]-peptidylproline (omega=0). In terms of biological role, involved in protein export. Acts as a chaperone by maintaining the newly synthesized protein in an open conformation. Functions as a peptidyl-prolyl cis-trans isomerase. This is Trigger factor from Helicobacter pylori (strain HPAG1).